The following is a 76-amino-acid chain: Small ribosomal subunit protein bS18 (76 aa).

This sequence belongs to the bacterial ribosomal protein bS18 family. In terms of assembly, part of the 30S ribosomal subunit. Forms a tight heterodimer with protein bS6.

In terms of biological role, binds as a heterodimer with protein bS6 to the central domain of the 16S rRNA, where it helps stabilize the platform of the 30S subunit. This is Small ribosomal subunit protein bS18 from Xanthomonas campestris pv. campestris (strain 8004).